The following is a 347-amino-acid chain: Quinolinate synthase (347 aa).

Iminosuccinate is bound by residues histidine 47 and serine 68. Cysteine 113 is a binding site for [4Fe-4S] cluster. Iminosuccinate is bound by residues 139 to 141 (YAN) and serine 156. Cysteine 200 is a binding site for [4Fe-4S] cluster. Residues 226 to 228 (HPE) and threonine 243 contribute to the iminosuccinate site. Cysteine 297 contacts [4Fe-4S] cluster.

This sequence belongs to the quinolinate synthase family. Type 1 subfamily. [4Fe-4S] cluster serves as cofactor.

The protein resides in the cytoplasm. The catalysed reaction is iminosuccinate + dihydroxyacetone phosphate = quinolinate + phosphate + 2 H2O + H(+). Its pathway is cofactor biosynthesis; NAD(+) biosynthesis; quinolinate from iminoaspartate: step 1/1. In terms of biological role, catalyzes the condensation of iminoaspartate with dihydroxyacetone phosphate to form quinolinate. This Escherichia coli O127:H6 (strain E2348/69 / EPEC) protein is Quinolinate synthase.